The primary structure comprises 310 residues: Ceramide synthase LOH1 (310 aa).

The next 6 helical transmembrane spans lie at 16 to 36, 85 to 105, 131 to 151, 157 to 177, 216 to 236, and 260 to 280; these read SFPT…FPTI, CIYY…EPWF, FLYM…VFWE, FGVS…SYIC, FVLF…FWIL, and YMFN…WVLI. The region spanning 76–289 is the TLC domain; sequence RKFKESAWKC…IYRMLVKQVQ (214 aa). Residues serine 300 and serine 302 each carry the phosphoserine modification.

In terms of tissue distribution, expressed ubiquitously at high levels. Not observed in pollen.

It localises to the endoplasmic reticulum membrane. It catalyses the reaction (4R)-hydroxysphinganine + a fatty acyl-CoA = an N-acyl-(4R)-4-hydroxysphinganine + CoA + H(+). The catalysed reaction is hexacosanoyl-CoA + (4R)-hydroxysphinganine = N-hexacosanoyl-(4R)-hydroxysphinganine + CoA + H(+). The enzyme catalyses tetracosanoyl-CoA + (4R)-hydroxysphinganine = N-tetracosanoyl-(4R)-hydroxysphinganine + CoA + H(+). Its pathway is sphingolipid metabolism. Inhibited by the mycotoxin fumonisin B(1), a sphingosine analog mycotoxins produced by pathogenic fungi. Repressed by divalent cation such as magnesium Mg(2+), copper Cu(2+), zinc Zn(2+), manganese Mn(2+), calcium Ca(2+) and cobalt Co(2+). In terms of biological role, essential for plant growth, promotes cell division in root meristems. Catalyzes the biosynthesis of ceramide sphingolipids with C(16) to C(28) fatty acids, structural membrane lipids involved in membrane trafficking (e.g. early endosomes) and cell polarity (e.g. polar auxin transport related proteins); mostly active with t18:0 and saturated very long saturated fatty acids (C24:0 and C26:0), such as long-chain base (LCB) phytosphingosine (t18:0), lignoceroyl- and hexacosanoyl-CoAs. Mediates resistance to sphinganine-analog mycotoxins (SAMs, e.g. fumonisin B(1)) by restoring the sphingolipid biosynthesis. Could salvage the transport of GPI-anchored proteins from the endoplasmic reticulum to the Golgi apparatus in ceramides-depleted cells after SAM exposure. May prevent precocious cell death by delaying PR1 accumulation during aging. Contributes to hypoxic conditions tolerance (e.g. submergences), especially in the dark, by promoting the formation of very-long-chain (VLC) ceramide species (22:1, 24:1 and 26:1) and of VLC unsaturated ceramides, which are modulating CTR1-mediated ethylene signaling leading to endoplasmic reticulum (ER)-to-nucleus translocation of EIN2 and EIN3. In Arabidopsis thaliana (Mouse-ear cress), this protein is Ceramide synthase LOH1.